An 82-amino-acid chain; its full sequence is RNA-binding protein BPUM_0095 (82 aa).

Belongs to the eukaryotic ribosomal protein eL8 family.

The polypeptide is RNA-binding protein BPUM_0095 (Bacillus pumilus (strain SAFR-032)).